Here is an 89-residue protein sequence, read N- to C-terminus: Small ribosomal subunit protein uS19 (89 aa).

This sequence belongs to the universal ribosomal protein uS19 family.

Functionally, protein S19 forms a complex with S13 that binds strongly to the 16S ribosomal RNA. This is Small ribosomal subunit protein uS19 from Xylella fastidiosa (strain M23).